A 432-amino-acid chain; its full sequence is Enolase (432 aa).

Gln163 is a (2R)-2-phosphoglycerate binding site. Glu205 (proton donor) is an active-site residue. 3 residues coordinate Mg(2+): Asp242, Glu288, and Asp315. Residues Lys340, Arg369, Ser370, and Lys391 each coordinate (2R)-2-phosphoglycerate. The active-site Proton acceptor is the Lys340.

This sequence belongs to the enolase family. Homodimer. It depends on Mg(2+) as a cofactor.

The protein localises to the cytoplasm. The protein resides in the secreted. It localises to the cell surface. The catalysed reaction is (2R)-2-phosphoglycerate = phosphoenolpyruvate + H2O. The protein operates within carbohydrate degradation; glycolysis; pyruvate from D-glyceraldehyde 3-phosphate: step 4/5. With respect to regulation, the covalent binding to the substrate causes inactivation of the enzyme, and possibly serves as a signal for the export of the protein. In terms of biological role, catalyzes the reversible conversion of 2-phosphoglycerate (2-PG) into phosphoenolpyruvate (PEP). It is essential for the degradation of carbohydrates via glycolysis. The chain is Enolase from Enterococcus hirae.